A 555-amino-acid polypeptide reads, in one-letter code: Coiled-coil domain-containing protein 102A (555 aa).

Disordered regions lie at residues 1–68, 136–202, and 214–254; these read MSHG…ADGD, LAGA…GSQE, and PEEP…EEDA. Ser12, Ser26, and Ser28 each carry phosphoserine. Positions 37–61 are enriched in pro residues; that stretch reads SLPPTPPSGTPSPGPPPALPLPPTP. Residues 72–161 adopt a coiled-coil conformation; sequence REELRLRELE…ARGRELARLR (90 aa). Composition is skewed to basic and acidic residues over residues 136-159 and 166-183; these read LAGARRERQEAQGESEARGRELAR and GVDRTPDGPETEPEREQE. The span at 224–236 shows a compositional bias: low complexity; it reads RSAGAGAPRGSSG. Coiled-coil stretches lie at residues 268–401 and 432–522; these read QKVL…RRQT and KLKK…QNAP. A disordered region spans residues 478 to 555; the sequence is ELDEAHNQAR…EDEDLQIQVA (78 aa). Residues 536 to 555 show a composition bias toward acidic residues; it reads EAGDGASDLDEDEDLQIQVA. Ser542 carries the post-translational modification Phosphoserine.

The chain is Coiled-coil domain-containing protein 102A (CCDC102A) from Bos taurus (Bovine).